Reading from the N-terminus, the 450-residue chain is MESTEKQKVSMVSLGCSKNLVDAEVMLGLLARQEYEITTDEREADIIIVNTCSFIKEAKQESIDAILDLAERKNDGRCHTLIVSGCLPQRYQEELARELPEVDIFIGTGDYPRIAEILAEKSGTDEQLCYIGDPDFVFDETLPRLNSSPAWFSYLKIGEGCSNRCSYCIIPKLRGPYRSRPLEALVAEAEQLASRGVKELNIISQDITRYGSDMEDGTTLETLLRRLVQIDGIQWIRLLYAYPDGISDALIALIRDEPKICKYLDIPLQHISDPVLKLMRRRSNEQQIRELLAKLRREIPTLALRTSLIVGFPGETMEDFTSLMQFVEQARFDRLGVFCYSREEGTPAATMPDQVSERVKRERHRKLMRIQARLSFKRNRELIGTTEQVIVEGYSEETELLLKGRSSRQAPDIDGQVYITAGTADVGDIVALRITDSSDYDLIGEIQERT.

The 117-residue stretch at 7–123 (QKVSMVSLGC…IAEILAEKSG (117 aa)) folds into the MTTase N-terminal domain. The [4Fe-4S] cluster site is built by cysteine 16, cysteine 52, cysteine 86, cysteine 161, cysteine 165, and cysteine 168. A Radical SAM core domain is found at 147–377 (SSPAWFSYLK…MRIQARLSFK (231 aa)). Residues 380 to 448 (RELIGTTEQV…DYDLIGEIQE (69 aa)) enclose the TRAM domain.

It belongs to the methylthiotransferase family. RimO subfamily. [4Fe-4S] cluster serves as cofactor.

Its subcellular location is the cytoplasm. The enzyme catalyses L-aspartate(89)-[ribosomal protein uS12]-hydrogen + (sulfur carrier)-SH + AH2 + 2 S-adenosyl-L-methionine = 3-methylsulfanyl-L-aspartate(89)-[ribosomal protein uS12]-hydrogen + (sulfur carrier)-H + 5'-deoxyadenosine + L-methionine + A + S-adenosyl-L-homocysteine + 2 H(+). In terms of biological role, catalyzes the methylthiolation of an aspartic acid residue of ribosomal protein uS12. The protein is Ribosomal protein uS12 methylthiotransferase RimO of Pelobacter propionicus (strain DSM 2379 / NBRC 103807 / OttBd1).